Reading from the N-terminus, the 578-residue chain is Septation ring formation regulator EzrA (578 aa).

At 1 to 8 (MKNNWIII) the chain is on the extracellular side. Residues 9 to 27 (LVLVIVIIAAVLYLIGYFM) form a helical membrane-spanning segment. The Cytoplasmic segment spans residues 28 to 578 (RKKNQEQLDE…NINNPNLTAI (551 aa)). Coiled-coil stretches lie at residues 103-165 (RFMK…DDKA), 256-285 (QNFAEEIQHAKKRVENSMADLEKTEIAAVE), and 394-490 (KILD…DDLE).

This sequence belongs to the EzrA family.

The protein localises to the cell membrane. Its function is as follows. Negative regulator of FtsZ ring formation; modulates the frequency and position of FtsZ ring formation. Inhibits FtsZ ring formation at polar sites. Interacts either with FtsZ or with one of its binding partners to promote depolymerization. This chain is Septation ring formation regulator EzrA, found in Enterococcus faecalis (strain ATCC 700802 / V583).